Here is a 298-residue protein sequence, read N- to C-terminus: 2-dehydro-3-deoxy-D-arabinonate dehydratase (298 aa).

I86 lines the substrate pocket. The Mg(2+) site is built by E148, E150, and D169. Substrate contacts are provided by K187 and T261.

The protein belongs to the FAH family. In terms of assembly, homotetramer. The cofactor is Mg(2+). Requires Ca(2+) as cofactor.

It carries out the reaction 2-dehydro-3-deoxy-D-arabinonate = 2,5-dioxopentanoate + H2O. In terms of biological role, participates in a pentose oxidation pathway that converts D-arabinonate to 2-oxoglutarate. This is 2-dehydro-3-deoxy-D-arabinonate dehydratase from Saccharolobus solfataricus (strain ATCC 35092 / DSM 1617 / JCM 11322 / P2) (Sulfolobus solfataricus).